A 155-amino-acid chain; its full sequence is cAMP-dependent protein kinase type II-alpha regulatory subunit (155 aa).

The interval 1–34 (SGSQDLEPSSGLVTDAIADSESEDDEDLDVPIPS) is disordered. The dimerization and phosphorylation stretch occupies residues 1-81 (SGSQDLEPSS…LQEACKDILL (81 aa)). A compositionally biased stretch (acidic residues) spans 18–29 (ADSESEDDEDLD). Phosphoserine occurs at positions 20 and 22. Serine 41 bears the Phosphoserine; by PKA mark. 3',5'-cyclic AMP contacts are provided by residues 82 to 155 (FKNL…ALMY) and glutamate 150.

Belongs to the cAMP-dependent kinase regulatory chain family. As to quaternary structure, the inactive form of the enzyme is composed of two regulatory chains and two catalytic chains. Activation by cAMP produces two active catalytic monomers and a regulatory dimer that binds four cAMP molecules. Interacts with AKAP4 and CBFA2T3. Interacts with the phosphorylated form of PJA2. Interacts with MYRIP; this interaction may link PKA to components of the exocytosis machinery, thus facilitating exocytosis, including insulin release. Forms a complex composed of PRKAR2A, GSK3B and GSKIP through GSKIP interaction; facilitates PKA-induced phosphorylation and regulates GSK3B activity. Interacts with ADCY8; inhibits adenylate cyclase activity through PKA phosphorylation. Post-translationally, phosphorylated by the activated catalytic chain. As to expression, four types of regulatory chains are found: I-alpha, I-beta, II-alpha, and II-beta. Their expression varies among tissues and is in some cases constitutive and in others inducible.

It localises to the cytoplasm. The protein localises to the cell membrane. Functionally, regulatory subunit of the cAMP-dependent protein kinases involved in cAMP signaling in cells. Type II regulatory chains mediate membrane association by binding to anchoring proteins, including the MAP2 kinase. This Sus scrofa (Pig) protein is cAMP-dependent protein kinase type II-alpha regulatory subunit (PRKAR2A).